A 465-amino-acid polypeptide reads, in one-letter code: Probable zinc metalloprotease PTT_17836 (465 aa).

The N-terminal stretch at 1-20 (MRSASTLAVCAATLLQIACS) is a signal peptide. N140 is a glycosylation site (N-linked (GlcNAc...) asparagine). Residues H163, D183, and E216 each coordinate Zn(2+). N231 carries N-linked (GlcNAc...) asparagine glycosylation. D243 contributes to the Zn(2+) binding site. N272, N330, N378, N384, N421, and N426 each carry an N-linked (GlcNAc...) asparagine glycan. Positions 371-464 (APTNVGVNTT…LPFPFGCARN (94 aa)) constitute a Fibronectin type-III domain.

The protein belongs to the peptidase M28 family. M28B subfamily. The cofactor is Zn(2+).

The protein localises to the secreted. The sequence is that of Probable zinc metalloprotease PTT_17836 from Pyrenophora teres f. teres (strain 0-1) (Barley net blotch fungus).